Consider the following 150-residue polypeptide: Large ribosomal subunit protein bL9 (150 aa).

Belongs to the bacterial ribosomal protein bL9 family.

In terms of biological role, binds to the 23S rRNA. The sequence is that of Large ribosomal subunit protein bL9 from Clavibacter sepedonicus (Clavibacter michiganensis subsp. sepedonicus).